The sequence spans 443 residues: MFKIREKTNADHKVKYIVDVNEKNWNEAYQKKLNAAVKNVKIQGFRKGHVPYQEAIKHIDQIGLFDRAVNQLVQPIYLELVKQEKIKDSETVLEENPEVSVVEIDDKKLALSYSFETIPEVKVGDYLKINGFLSETPVKDEDVQTELVRIFKSAGKLVDKKEGATLEKGDIAFLDFSGEIDNKAFEGGKAKNYELEIGSNSFIPGFEDQMVGMKVGEKRDLNLTFPKDYHEKTYAGKPVLFKVKLNSIKEVQLPEMTVEKLNELMKTQYKNLDEAKEDIKKRMDRNQQEHANQMNTMLLTQFANEDCQFSHIPKSLLDREVNLLYQQFANQMQQIKMSVEDALKIQNQTKEQLYQRLTEQATRAIKLVLVLEEIGDLEKISVSEAEINQEIEERIKEISNNQELPKEQYDAIKNYFVTQKELIESMLTNKKVVDLIIKKNLAR.

The region spanning 169 to 254 (GDIAFLDFSG…LNSIKEVQLP (86 aa)) is the PPIase FKBP-type domain.

This sequence belongs to the FKBP-type PPIase family. Tig subfamily.

The protein localises to the cytoplasm. It carries out the reaction [protein]-peptidylproline (omega=180) = [protein]-peptidylproline (omega=0). In terms of biological role, involved in protein export. Acts as a chaperone by maintaining the newly synthesized protein in an open conformation. Functions as a peptidyl-prolyl cis-trans isomerase. The protein is Trigger factor of Mycoplasmoides gallisepticum (strain R(low / passage 15 / clone 2)) (Mycoplasma gallisepticum).